The primary structure comprises 446 residues: Sensor protein PfeS (446 aa).

Residues 1–9 lie on the Cytoplasmic side of the membrane; the sequence is MRRHPLLWK. Residues 10–30 traverse the membrane as a helical segment; it reads LALLQVGFCLLLTWLIYTWGL. The Periplasmic segment spans residues 31–155; the sequence is SVERSTYFLA…LLPGGLTPWT (125 aa). The chain crosses the membrane as a helical span at residues 156–176; it reads HLVTHGIVPTLLAALLGLLLY. The HAMP domain maps to 177–233; that stretch reads RHLVVPLNRLRDRADALRADELESTPLAAPLAARRDELGELAQALEHMAERLRLSLA. At 177–446 the chain is on the cytoplasmic side; that stretch reads RHLVVPLNRL…CLHLWLPAAA (270 aa). Residues 241–446 form the Histidine kinase domain; that stretch reads TLSHELRTPL…CLHLWLPAAA (206 aa). Residue His244 is modified to Phosphohistidine; by autocatalysis.

The protein resides in the cell inner membrane. The enzyme catalyses ATP + protein L-histidine = ADP + protein N-phospho-L-histidine.. Functionally, member of the two-component regulatory system PfeR/PfeS. May activate PfeR by phosphorylation. The polypeptide is Sensor protein PfeS (pfeS) (Pseudomonas aeruginosa (strain ATCC 15692 / DSM 22644 / CIP 104116 / JCM 14847 / LMG 12228 / 1C / PRS 101 / PAO1)).